Consider the following 315-residue polypeptide: MEESVGSRGGSGGGGLDAQIEQLMECRPLSETEVKTLCEKAKEILMEESNVQPVKSPVTICGDIHGQFHDLVELFRIGGKCPDTNYLFMGDYVDRGYYSVETVTLLVALKVRYPQRITILRGNHESRQITQVYGFYDECLRKYGSANVWKIFTDLFDYFPLTALVESEIFCLHGGLSPSIDNLDSVRSLDRVQEVPHEGPMCDLLWSDPDDRCGWGISPRGAGYTFGQDISEQFNHSNNLKLVARAHQLVMEGYNWAHEQKVVTIFSAPNYCYRCGNMASILEVDDCRNHTFIQFEPAPRRGEPDVTRRTPDYFL.

The Mn(2+) site is built by D63, H65, D91, and N123. H124 (proton donor) is an active-site residue. Positions 173 and 247 each coordinate Mn(2+).

This sequence belongs to the PPP phosphatase family. PP-2A subfamily. It depends on Mn(2+) as a cofactor.

The protein localises to the cytoplasm. It carries out the reaction O-phospho-L-seryl-[protein] + H2O = L-seryl-[protein] + phosphate. The enzyme catalyses O-phospho-L-threonyl-[protein] + H2O = L-threonyl-[protein] + phosphate. This is Putative serine/threonine-protein phosphatase PP2A-4 catalytic subunit (PP2A4) from Oryza sativa subsp. indica (Rice).